Reading from the N-terminus, the 687-residue chain is Glycine--tRNA ligase beta subunit (687 aa).

It belongs to the class-II aminoacyl-tRNA synthetase family. In terms of assembly, tetramer of two alpha and two beta subunits.

It is found in the cytoplasm. It carries out the reaction tRNA(Gly) + glycine + ATP = glycyl-tRNA(Gly) + AMP + diphosphate. In Neisseria meningitidis serogroup B (strain ATCC BAA-335 / MC58), this protein is Glycine--tRNA ligase beta subunit.